A 244-amino-acid polypeptide reads, in one-letter code: MSFIVYPALDIRDGRVVRLRQGDYAQETSYGDDALPRAQALAAQGAQWMHLVDLDAARAGGYTLAPLLASIRAQTPLQVQTGGGVRGRDDVARILDAGAGRVVVGSLAVRRPDEVVGWLEEFGAERITIALDARQDAQGQWQLPVHGWTENAGVTLDVLAQRYARAGMRHLLCTDIARDGMLAGPNISLYQHLSALLPGVAVQASGGIRDVADVAEARRAGCGGAILGKALLEQRMDLAEALAC.

Catalysis depends on aspartate 10, which acts as the Proton acceptor. Residue aspartate 132 is the Proton donor of the active site.

The protein belongs to the HisA/HisF family.

It localises to the cytoplasm. It carries out the reaction 1-(5-phospho-beta-D-ribosyl)-5-[(5-phospho-beta-D-ribosylamino)methylideneamino]imidazole-4-carboxamide = 5-[(5-phospho-1-deoxy-D-ribulos-1-ylimino)methylamino]-1-(5-phospho-beta-D-ribosyl)imidazole-4-carboxamide. It participates in amino-acid biosynthesis; L-histidine biosynthesis; L-histidine from 5-phospho-alpha-D-ribose 1-diphosphate: step 4/9. The chain is 1-(5-phosphoribosyl)-5-[(5-phosphoribosylamino)methylideneamino] imidazole-4-carboxamide isomerase from Stenotrophomonas maltophilia (strain K279a).